Consider the following 445-residue polypeptide: RNA pseudouridine synthase 2, chloroplastic (445 aa).

Residues 1–44 (MATTAAASPPAIATALSALLRRQRRRSSRCVGASHARCLAADAN) constitute a chloroplast transit peptide. Positions 47-66 (AVAPSRRGGHGGTRLEEAVP) are disordered. An S4 RNA-binding domain is found at 72–147 (SRIDAWISAR…IPLDIVYEDD (76 aa)). Asp235 is a catalytic residue.

It belongs to the pseudouridine synthase RluA family.

The protein resides in the plastid. It is found in the chloroplast. It carries out the reaction a uridine in RNA = a pseudouridine in RNA. The protein is RNA pseudouridine synthase 2, chloroplastic of Oryza sativa subsp. japonica (Rice).